The primary structure comprises 366 residues: MEISDIRNELEAMAKRLENYRASLNLTEKEARIAELENEMTYPDFWDNQEKAQKVIDESNGLKAMVDKYQDLANQHEDGEVTLELIKEEPDAEMQEELGESIQALKKEFDDFELEILLNGPYDANNAILELHPGAGGTESQDWASMLLRMYQRFADKQGWKVETVDYLPGEEAGVKSVTLRIVGHNAYGYLKAEKGIHRLVRISPFDSSGRRHTSFVSCDVMPEFDDDIEIEVRTEDLRIDTYRASGAGGQHINTTDSAVRITHVPTGVVVSCQTERSQIKNRESAMKMLKAKLYQRELDEQQRKLDEIRGEKTDIGWGSQIRSYVFHPYSMVKDHRTNYEVGNTSGVMDGDVMPFIDAYLRKTNM.

The residue at position 251 (glutamine 251) is an N5-methylglutamine.

It belongs to the prokaryotic/mitochondrial release factor family. In terms of processing, methylated by PrmC. Methylation increases the termination efficiency of RF2.

It is found in the cytoplasm. Functionally, peptide chain release factor 2 directs the termination of translation in response to the peptide chain termination codons UGA and UAA. The polypeptide is Peptide chain release factor 2 (Exiguobacterium sp. (strain ATCC BAA-1283 / AT1b)).